We begin with the raw amino-acid sequence, 499 residues long: BTB/POZ domain-containing protein 16 (499 aa).

In terms of domain architecture, BTB spans 143 to 199 (INDPLVTREAFATALKNLYMQEVKICLDDVLGVLAAAHILQFGSLFQRCVTVMMSGL).

The sequence is that of BTB/POZ domain-containing protein 16 (BTBD16) from Bos taurus (Bovine).